Consider the following 285-residue polypeptide: ATP synthase gamma chain (285 aa).

The protein belongs to the ATPase gamma chain family. In terms of assembly, F-type ATPases have 2 components, CF(1) - the catalytic core - and CF(0) - the membrane proton channel. CF(1) has five subunits: alpha(3), beta(3), gamma(1), delta(1), epsilon(1). CF(0) has three main subunits: a, b and c.

It localises to the cell membrane. Its function is as follows. Produces ATP from ADP in the presence of a proton gradient across the membrane. The gamma chain is believed to be important in regulating ATPase activity and the flow of protons through the CF(0) complex. The sequence is that of ATP synthase gamma chain from Dehalococcoides mccartyi (strain ATCC BAA-2100 / JCM 16839 / KCTC 5957 / BAV1).